A 127-amino-acid polypeptide reads, in one-letter code: Large ribosomal subunit protein eL8 (127 aa).

This sequence belongs to the eukaryotic ribosomal protein eL8 family. Part of the 50S ribosomal subunit. Probably part of the RNase P complex.

The protein localises to the cytoplasm. Its function is as follows. Multifunctional RNA-binding protein that recognizes the K-turn motif in ribosomal RNA, the RNA component of RNase P, box H/ACA, box C/D and box C'/D' sRNAs. The sequence is that of Large ribosomal subunit protein eL8 from Saccharolobus islandicus (strain Y.N.15.51 / Yellowstone #2) (Sulfolobus islandicus).